The chain runs to 456 residues: Bifunctional protein GlmU (456 aa).

The segment at 1 to 228 (MPQNTLNIVI…SYLAAGVNNK (228 aa)) is pyrophosphorylase. Residues 11–14 (LAAG), K25, Q75, 80–81 (GT), 102–104 (YGD), G138, E153, N168, and N226 contribute to the UDP-N-acetyl-alpha-D-glucosamine site. D104 is a binding site for Mg(2+). N226 lines the Mg(2+) pocket. A linker region spans residues 229-249 (LQLAELERIFQTEQAQELLKA). The N-acetyltransferase stretch occupies residues 250 to 456 (GVTLSDPARF…GWVRPEKDKQ (207 aa)). Positions 332 and 350 each coordinate UDP-N-acetyl-alpha-D-glucosamine. The active-site Proton acceptor is H362. The UDP-N-acetyl-alpha-D-glucosamine site is built by Y365 and N376. Acetyl-CoA contacts are provided by residues A379, 385–386 (NY), S404, A422, and R439.

It in the N-terminal section; belongs to the N-acetylglucosamine-1-phosphate uridyltransferase family. In the C-terminal section; belongs to the transferase hexapeptide repeat family. In terms of assembly, homotrimer. Mg(2+) serves as cofactor.

The protein localises to the cytoplasm. It carries out the reaction alpha-D-glucosamine 1-phosphate + acetyl-CoA = N-acetyl-alpha-D-glucosamine 1-phosphate + CoA + H(+). It catalyses the reaction N-acetyl-alpha-D-glucosamine 1-phosphate + UTP + H(+) = UDP-N-acetyl-alpha-D-glucosamine + diphosphate. It participates in nucleotide-sugar biosynthesis; UDP-N-acetyl-alpha-D-glucosamine biosynthesis; N-acetyl-alpha-D-glucosamine 1-phosphate from alpha-D-glucosamine 6-phosphate (route II): step 2/2. It functions in the pathway nucleotide-sugar biosynthesis; UDP-N-acetyl-alpha-D-glucosamine biosynthesis; UDP-N-acetyl-alpha-D-glucosamine from N-acetyl-alpha-D-glucosamine 1-phosphate: step 1/1. The protein operates within bacterial outer membrane biogenesis; LPS lipid A biosynthesis. In terms of biological role, catalyzes the last two sequential reactions in the de novo biosynthetic pathway for UDP-N-acetylglucosamine (UDP-GlcNAc). The C-terminal domain catalyzes the transfer of acetyl group from acetyl coenzyme A to glucosamine-1-phosphate (GlcN-1-P) to produce N-acetylglucosamine-1-phosphate (GlcNAc-1-P), which is converted into UDP-GlcNAc by the transfer of uridine 5-monophosphate (from uridine 5-triphosphate), a reaction catalyzed by the N-terminal domain. The chain is Bifunctional protein GlmU from Neisseria meningitidis serogroup C / serotype 2a (strain ATCC 700532 / DSM 15464 / FAM18).